A 286-amino-acid polypeptide reads, in one-letter code: Prohibitin-6, mitochondrial (286 aa).

Residues 1–12 lie on the Mitochondrial matrix side of the membrane; the sequence is MNFKNVKVPKGP. The chain crosses the membrane as a helical; Signal-anchor for type II membrane protein span at residues 13–35; the sequence is GGGVIAAVVIGGLSLYGATHTLY. Topologically, residues 36 to 286 are mitochondrial intermembrane; sequence NVDGGHRAIV…AMDLDVKPKK (251 aa).

It belongs to the prohibitin family. In terms of assembly, component of a prohibitin multimeric complex in mitochondrial membranes. In terms of tissue distribution, mostly expressed in proliferative tissues, including vasculature, shoot and root apical tissues.

It localises to the mitochondrion inner membrane. Functionally, prohibitin probably acts as a holdase/unfoldase for the stabilization of newly synthesized mitochondrial proteins. The chain is Prohibitin-6, mitochondrial (PHB6) from Arabidopsis thaliana (Mouse-ear cress).